Here is a 343-residue protein sequence, read N- to C-terminus: Dihydroorotate dehydrogenase (quinone) (343 aa).

Residues 61-65 and Thr85 contribute to the FMN site; that span reads AGLDK. Residue Lys65 participates in substrate binding. Substrate is bound at residue 110 to 114; that stretch reads NRMGF. The FMN site is built by Asn138 and Asn171. Residue Asn171 coordinates substrate. The active-site Nucleophile is Ser174. Asn176 provides a ligand contact to substrate. FMN contacts are provided by Lys216 and Thr244. 245–246 contributes to the substrate binding site; sequence NT. FMN contacts are provided by residues Gly267, Gly296, and 317-318; that span reads YS.

Belongs to the dihydroorotate dehydrogenase family. Type 2 subfamily. In terms of assembly, monomer. FMN serves as cofactor.

The protein localises to the cell membrane. It carries out the reaction (S)-dihydroorotate + a quinone = orotate + a quinol. The protein operates within pyrimidine metabolism; UMP biosynthesis via de novo pathway; orotate from (S)-dihydroorotate (quinone route): step 1/1. Catalyzes the conversion of dihydroorotate to orotate with quinone as electron acceptor. This Pseudomonas syringae pv. syringae (strain B728a) protein is Dihydroorotate dehydrogenase (quinone).